Here is a 317-residue protein sequence, read N- to C-terminus: Transaldolase (317 aa).

Lysine 126 serves as the catalytic Schiff-base intermediate with substrate.

This sequence belongs to the transaldolase family. Type 1 subfamily. As to quaternary structure, homodimer.

It is found in the cytoplasm. It catalyses the reaction D-sedoheptulose 7-phosphate + D-glyceraldehyde 3-phosphate = D-erythrose 4-phosphate + beta-D-fructose 6-phosphate. It functions in the pathway carbohydrate degradation; pentose phosphate pathway; D-glyceraldehyde 3-phosphate and beta-D-fructose 6-phosphate from D-ribose 5-phosphate and D-xylulose 5-phosphate (non-oxidative stage): step 2/3. In terms of biological role, transaldolase is important for the balance of metabolites in the pentose-phosphate pathway. This chain is Transaldolase, found in Burkholderia cenocepacia (strain ATCC BAA-245 / DSM 16553 / LMG 16656 / NCTC 13227 / J2315 / CF5610) (Burkholderia cepacia (strain J2315)).